Reading from the N-terminus, the 196-residue chain is dITP/XTP pyrophosphatase (196 aa).

Serine 10–lysine 15 contributes to the substrate binding site. Mg(2+) contacts are provided by glutamate 40 and aspartate 69. Aspartate 69 acts as the Proton acceptor in catalysis. Residues serine 70, phenylalanine 147–aspartate 150, lysine 170, and histidine 175–arginine 176 each bind substrate.

Belongs to the HAM1 NTPase family. In terms of assembly, homodimer. It depends on Mg(2+) as a cofactor.

It carries out the reaction XTP + H2O = XMP + diphosphate + H(+). The enzyme catalyses dITP + H2O = dIMP + diphosphate + H(+). It catalyses the reaction ITP + H2O = IMP + diphosphate + H(+). In terms of biological role, pyrophosphatase that catalyzes the hydrolysis of nucleoside triphosphates to their monophosphate derivatives, with a high preference for the non-canonical purine nucleotides XTP (xanthosine triphosphate), dITP (deoxyinosine triphosphate) and ITP. Seems to function as a house-cleaning enzyme that removes non-canonical purine nucleotides from the nucleotide pool, thus preventing their incorporation into DNA/RNA and avoiding chromosomal lesions. In Prochlorococcus marinus (strain NATL1A), this protein is dITP/XTP pyrophosphatase.